A 313-amino-acid polypeptide reads, in one-letter code: 4-hydroxy-3-methylbut-2-enyl diphosphate reductase (313 aa).

Residue C12 participates in [4Fe-4S] cluster binding. The (2E)-4-hydroxy-3-methylbut-2-enyl diphosphate site is built by H41 and H74. H41 and H74 together coordinate dimethylallyl diphosphate. H41 and H74 together coordinate isopentenyl diphosphate. Residue C96 coordinates [4Fe-4S] cluster. H124 contributes to the (2E)-4-hydroxy-3-methylbut-2-enyl diphosphate binding site. Residue H124 participates in dimethylallyl diphosphate binding. Residue H124 participates in isopentenyl diphosphate binding. E126 functions as the Proton donor in the catalytic mechanism. Residue T167 participates in (2E)-4-hydroxy-3-methylbut-2-enyl diphosphate binding. [4Fe-4S] cluster is bound at residue C197. Residues S225, S226, N227, and S269 each contribute to the (2E)-4-hydroxy-3-methylbut-2-enyl diphosphate site. 4 residues coordinate dimethylallyl diphosphate: S225, S226, N227, and S269. The isopentenyl diphosphate site is built by S225, S226, N227, and S269.

The protein belongs to the IspH family. The cofactor is [4Fe-4S] cluster.

It carries out the reaction isopentenyl diphosphate + 2 oxidized [2Fe-2S]-[ferredoxin] + H2O = (2E)-4-hydroxy-3-methylbut-2-enyl diphosphate + 2 reduced [2Fe-2S]-[ferredoxin] + 2 H(+). It catalyses the reaction dimethylallyl diphosphate + 2 oxidized [2Fe-2S]-[ferredoxin] + H2O = (2E)-4-hydroxy-3-methylbut-2-enyl diphosphate + 2 reduced [2Fe-2S]-[ferredoxin] + 2 H(+). The protein operates within isoprenoid biosynthesis; dimethylallyl diphosphate biosynthesis; dimethylallyl diphosphate from (2E)-4-hydroxy-3-methylbutenyl diphosphate: step 1/1. It participates in isoprenoid biosynthesis; isopentenyl diphosphate biosynthesis via DXP pathway; isopentenyl diphosphate from 1-deoxy-D-xylulose 5-phosphate: step 6/6. Catalyzes the conversion of 1-hydroxy-2-methyl-2-(E)-butenyl 4-diphosphate (HMBPP) into a mixture of isopentenyl diphosphate (IPP) and dimethylallyl diphosphate (DMAPP). Acts in the terminal step of the DOXP/MEP pathway for isoprenoid precursor biosynthesis. The sequence is that of 4-hydroxy-3-methylbut-2-enyl diphosphate reductase from Photobacterium profundum (strain SS9).